The sequence spans 204 residues: Salt stress root protein RS1 (204 aa).

The disordered stretch occupies residues 128–204 (FVPKEEPKPE…AAPAAEPEKQ (77 aa)). Positions 147–161 (TSREVAVEEEKKEEE) are enriched in basic and acidic residues. Residues 164–180 (PAEPAAAAAEAAAPSTE) are compositionally biased toward low complexity. Residues 182–192 (VEEKKEEEKPA) show a composition bias toward basic and acidic residues. Low complexity predominate over residues 193–204 (EAAAPAAEPEKQ).

It belongs to the DREPP family.

The protein is Salt stress root protein RS1 of Oryza sativa subsp. indica (Rice).